The sequence spans 772 residues: Heat shock protein 88 (772 aa).

2 disordered regions span residues 496-519 and 729-772; these read TAAP…AEEK and LGKP…DILD. Low complexity predominate over residues 497–513; that stretch reads AAPAETPAETPANGEAA. The span at 735–772 shows a compositional bias: basic and acidic residues; that stretch reads KPVEVPKEEPKDTPMESKDAPAEEPVATKDQKMDDILD.

It belongs to the heat shock protein 70 family.

Its function is as follows. May function in protein folding and assembly, and disassembly of protein complexes. This chain is Heat shock protein 88 (hspH), found in Dictyostelium discoideum (Social amoeba).